The following is a 156-amino-acid chain: ATP synthase subunit b (156 aa).

The chain crosses the membrane as a helical span at residues 13–33 (AFIIFVWFCMKFVWPPLMNAI).

This sequence belongs to the ATPase B chain family. In terms of assembly, F-type ATPases have 2 components, F(1) - the catalytic core - and F(0) - the membrane proton channel. F(1) has five subunits: alpha(3), beta(3), gamma(1), delta(1), epsilon(1). F(0) has three main subunits: a(1), b(2) and c(10-14). The alpha and beta chains form an alternating ring which encloses part of the gamma chain. F(1) is attached to F(0) by a central stalk formed by the gamma and epsilon chains, while a peripheral stalk is formed by the delta and b chains.

It is found in the cell inner membrane. Functionally, f(1)F(0) ATP synthase produces ATP from ADP in the presence of a proton or sodium gradient. F-type ATPases consist of two structural domains, F(1) containing the extramembraneous catalytic core and F(0) containing the membrane proton channel, linked together by a central stalk and a peripheral stalk. During catalysis, ATP synthesis in the catalytic domain of F(1) is coupled via a rotary mechanism of the central stalk subunits to proton translocation. Component of the F(0) channel, it forms part of the peripheral stalk, linking F(1) to F(0). In Shewanella sediminis (strain HAW-EB3), this protein is ATP synthase subunit b.